We begin with the raw amino-acid sequence, 500 residues long: Glycerol kinase (500 aa).

Thr-13 lines the ADP pocket. ATP contacts are provided by Thr-13, Thr-14, and Ser-15. Thr-13 serves as a coordination point for sn-glycerol 3-phosphate. Arg-17 serves as a coordination point for ADP. Sn-glycerol 3-phosphate contacts are provided by Arg-83, Glu-84, and Tyr-135. Glycerol contacts are provided by Arg-83, Glu-84, and Tyr-135. The residue at position 231 (His-231) is a Phosphohistidine; by HPr. Asp-245 serves as a coordination point for sn-glycerol 3-phosphate. Glycerol-binding residues include Asp-245 and Gln-246. Residues Thr-267 and Gly-310 each coordinate ADP. Residues Thr-267, Gly-310, Gln-314, and Gly-411 each coordinate ATP. ADP contacts are provided by Gly-411 and Asn-415.

It belongs to the FGGY kinase family. As to quaternary structure, homotetramer and homodimer (in equilibrium). The phosphoenolpyruvate-dependent sugar phosphotransferase system (PTS), including enzyme I, and histidine-containing protein (HPr) are required for the phosphorylation, which leads to the activation of the enzyme.

The enzyme catalyses glycerol + ATP = sn-glycerol 3-phosphate + ADP + H(+). It functions in the pathway polyol metabolism; glycerol degradation via glycerol kinase pathway; sn-glycerol 3-phosphate from glycerol: step 1/1. With respect to regulation, activated by phosphorylation and inhibited by fructose 1,6-bisphosphate (FBP). Key enzyme in the regulation of glycerol uptake and metabolism. Catalyzes the phosphorylation of glycerol to yield sn-glycerol 3-phosphate. This Oceanobacillus iheyensis (strain DSM 14371 / CIP 107618 / JCM 11309 / KCTC 3954 / HTE831) protein is Glycerol kinase.